Consider the following 321-residue polypeptide: Cysteine and histidine-rich domain-containing protein 1 (321 aa).

Positions 9, 14, 28, 31, 46, 47, 63, 68, 152, 157, 170, 173, 188, 189, 205, and 210 each coordinate Zn(2+). CHORD domains are found at residues 9–68 (CYHK…RGKH) and 152–210 (CRNN…SGEH). In terms of domain architecture, CS spans 218–308 (VSKFREDWFS…KHGTGWPRLK (91 aa)).

Regulates centrosome duplication. Controls the secretion of the tyrosine kinase receptor let-23/EGFR from the endoplasmic reticulum and is required for the localization of let-23/EGFR to the plasma membrane of vulval precursor cells. It thus plays a role in positively regulating let/EGFR signaling, and anchor cell and vulval precursor cell alignment. Plays a role in vulval development and morphogenesis. The polypeptide is Cysteine and histidine-rich domain-containing protein 1 (Caenorhabditis elegans).